A 122-amino-acid chain; its full sequence is NADH-quinone oxidoreductase subunit A (122 aa).

3 consecutive transmembrane segments (helical) span residues 10 to 30 (LIVF…LTIG), 67 to 87 (FALL…WAVV), and 91 to 111 (LGLF…IGLI).

The protein belongs to the complex I subunit 3 family. In terms of assembly, NDH-1 is composed of 14 different subunits. Subunits NuoA, H, J, K, L, M, N constitute the membrane sector of the complex.

Its subcellular location is the cell membrane. The enzyme catalyses a quinone + NADH + 5 H(+)(in) = a quinol + NAD(+) + 4 H(+)(out). NDH-1 shuttles electrons from NADH, via FMN and iron-sulfur (Fe-S) centers, to quinones in the respiratory chain. The immediate electron acceptor for the enzyme in this species is believed to be a menaquinone. Couples the redox reaction to proton translocation (for every two electrons transferred, four hydrogen ions are translocated across the cytoplasmic membrane), and thus conserves the redox energy in a proton gradient. This chain is NADH-quinone oxidoreductase subunit A, found in Geobacillus thermodenitrificans (strain NG80-2).